The sequence spans 685 residues: DNA ligase (685 aa).

NAD(+) is bound by residues 47–51 (DSEYD), 96–97 (SL), and Glu125. Lys127 (N6-AMP-lysine intermediate) is an active-site residue. NAD(+) contacts are provided by Arg148, Glu185, Lys304, and Lys328. 4 residues coordinate Zn(2+): Cys422, Cys425, Cys440, and Cys446. Positions 605-685 (AEAQPLKGQT…ELLALLAANA (81 aa)) constitute a BRCT domain.

Belongs to the NAD-dependent DNA ligase family. LigA subfamily. Mg(2+) is required as a cofactor. It depends on Mn(2+) as a cofactor.

The catalysed reaction is NAD(+) + (deoxyribonucleotide)n-3'-hydroxyl + 5'-phospho-(deoxyribonucleotide)m = (deoxyribonucleotide)n+m + AMP + beta-nicotinamide D-nucleotide.. In terms of biological role, DNA ligase that catalyzes the formation of phosphodiester linkages between 5'-phosphoryl and 3'-hydroxyl groups in double-stranded DNA using NAD as a coenzyme and as the energy source for the reaction. It is essential for DNA replication and repair of damaged DNA. This chain is DNA ligase, found in Shewanella baltica (strain OS223).